The primary structure comprises 425 residues: Dihydroorotase (425 aa).

Positions 61 and 63 each coordinate Zn(2+). Substrate is bound by residues 63-65 (HLR) and Asn-95. Zn(2+) contacts are provided by Asp-153, His-180, and His-233. Asn-279 contributes to the substrate binding site. A Zn(2+)-binding site is contributed by Asp-306. Asp-306 is an active-site residue. His-310 is a substrate binding site.

It belongs to the metallo-dependent hydrolases superfamily. DHOase family. Class I DHOase subfamily. Zn(2+) is required as a cofactor.

The enzyme catalyses (S)-dihydroorotate + H2O = N-carbamoyl-L-aspartate + H(+). The protein operates within pyrimidine metabolism; UMP biosynthesis via de novo pathway; (S)-dihydroorotate from bicarbonate: step 3/3. Its function is as follows. Catalyzes the reversible cyclization of carbamoyl aspartate to dihydroorotate. The protein is Dihydroorotase of Geobacter sp. (strain M21).